Consider the following 568-residue polypeptide: Kelch-like protein 12 (568 aa).

The 68-residue stretch at 33–100 (CDVTLRVEQK…VYTETVHVTV (68 aa)) folds into the BTB domain. One can recognise a BACK domain in the interval 135–236 (CLGIRDFAET…LTPRYITDVI (102 aa)). 6 Kelch repeats span residues 282–329 (VLLV…SLHD), 331–379 (IYVI…TLGD), 380–426 (MIYV…VASG), 427–473 (VIYC…LLND), 474–520 (HIYV…VLRG), and 522–567 (LYAI…ALRE).

In terms of assembly, component of the BCR(KLHL12) E3 ubiquitin ligase complex, at least composed of CUL3 and KLHL12 and RBX1. This complex interacts with DVL3 upon activation of the Wnt signaling pathway by WNT3A. Interacts with DRD4, KLHL2 and SEC31A. Interacts with PEF1 and PDCD6/ALG-2; interaction takes place in response to cytosolic calcium increase and leads to bridge together the BCR(KLHL12) complex and SEC31 (SEC31A or SEC31B). In terms of processing, ubiquitinated by the SCF(FBXL17) complex, leading to its degradation by the proteasome: ubiquitination by the SCF(FBXL17) complex takes place when aberrant BTB domain dimers are formed.

The protein resides in the cytoplasmic vesicle. It localises to the COPII-coated vesicle. It functions in the pathway protein modification; protein ubiquitination. Its function is as follows. Substrate-specific adapter of a BCR (BTB-CUL3-RBX1) E3 ubiquitin ligase complex that acts as a negative regulator of Wnt signaling pathway and ER-Golgi transport. The BCR(KLHL12) complex is involved in ER-Golgi transport by regulating the size of COPII coats, thereby playing a key role in collagen export, which is required for embryonic stem (ES) cells division: BCR(KLHL12) acts by mediating monoubiquitination of SEC31 (SEC31A or SEC31B). The BCR(KLHL12) complex is also involved in neural crest specification: in response to cytosolic calcium increase, interacts with the heterodimer formed with PEF1 and PDCD6/ALG-2, leading to bridge together the BCR(KLHL12) complex and SEC31 (SEC31A or SEC31B), promoting monoubiquitination of SEC31 and subsequent collagen export. As part of the BCR(KLHL12) complex, also acts as a negative regulator of the Wnt signaling pathway by mediating ubiquitination and subsequent proteolysis of DVL3. The BCR(KLHL12) complex also mediates polyubiquitination of DRD4 and PEF1, without leading to degradation of these proteins. This chain is Kelch-like protein 12 (KLHL12), found in Bos taurus (Bovine).